Here is a 472-residue protein sequence, read N- to C-terminus: Arginine biosynthesis bifunctional protein ArgJ, mitochondrial (472 aa).

Substrate-binding residues include Thr-200, Lys-229, Thr-240, Glu-327, Asn-467, and Thr-472. Thr-240 functions as the Nucleophile in the catalytic mechanism.

Belongs to the ArgJ family. As to quaternary structure, heterodimer of an alpha and a beta chain. The alpha and beta chains are autoproteolytically processed from a single precursor protein within the mitochondrion.

It localises to the mitochondrion matrix. It carries out the reaction N(2)-acetyl-L-ornithine + L-glutamate = N-acetyl-L-glutamate + L-ornithine. The catalysed reaction is L-glutamate + acetyl-CoA = N-acetyl-L-glutamate + CoA + H(+). It functions in the pathway amino-acid biosynthesis; L-arginine biosynthesis; L-ornithine and N-acetyl-L-glutamate from L-glutamate and N(2)-acetyl-L-ornithine (cyclic): step 1/1. The protein operates within amino-acid biosynthesis; L-arginine biosynthesis; N(2)-acetyl-L-ornithine from L-glutamate: step 1/4. Functionally, catalyzes two activities which are involved in the cyclic version of arginine biosynthesis: the synthesis of acetylglutamate from glutamate and acetyl-CoA, and of ornithine by transacetylation between acetylornithine and glutamate. The sequence is that of Arginine biosynthesis bifunctional protein ArgJ, mitochondrial from Talaromyces marneffei (strain ATCC 18224 / CBS 334.59 / QM 7333) (Penicillium marneffei).